The chain runs to 202 residues: Eukaryotic translation initiation factor isoform 4E (202 aa).

The tract at residues 1–24 (MATEAPPPVDTTEVPPFTAAETAV) is disordered. Residues 46–51 (QGAAWG), Lys-78, and 96–97 (WE) each bind mRNA. Cys-101 and Cys-140 are joined by a disulfide. MRNA is bound by residues 147 to 152 (RRSQDK) and 191 to 194 (KRER).

The protein belongs to the eukaryotic initiation factor 4E family. EIF4F is a multi-subunit complex, the composition of which varies with external and internal environmental conditions. It is composed of at least EIF4A, EIF4E and EIF4G. EIF4E is also known to interact with other partners. In higher plants two isoforms of EIF4F have been identified, named isoform EIF4F and isoform EIF(iso)4F. Isoform EIF4F has subunits p220 and p26, whereas isoform EIF(iso)4F has subunits p82 and p28. In terms of assembly, (Microbial infection) Interacts with viral genome-linked protein (VPg); this interaction is possible in susceptible hosts but impaired in resistant plants. Post-translationally, according to the redox status, the Cys-101-Cys-140 disulfide bridge may have a role in regulating protein function by affecting its ability to bind capped mRNA.

The protein localises to the cytoplasm. Its subcellular location is the nucleus. Functionally, component of the protein complex eIF4F, which is involved in the recognition of the mRNA cap, ATP-dependent unwinding of 5'-terminal secondary structure and recruitment of mRNA to the ribosome. Recognizes and binds the 7-methylguanosine-containing mRNA cap during an early step in the initiation of protein synthesis and facilitates ribosome binding by inducing the unwinding of the mRNAs secondary structures. Key component of recessive resistance to potyviruses. In terms of biological role, (Microbial infection) Susceptibility host factor required for viral infection by recruiting viral RNAs to the host ribosomal complex via an interaction with viral genome-linked protein (VPg). This chain is Eukaryotic translation initiation factor isoform 4E, found in Capsicum annuum (Capsicum pepper).